A 156-amino-acid polypeptide reads, in one-letter code: MPRKGPVAKRDVLPDPLYNSKLVSRLINKMMIDGKKGKSQTILYKSFDIIKERTGNDAMEVFEQALKNIMPVLEVKARRVGGANYQVPVEVRPERRTTLGLRWLVNYARLRGEKTMEERLANEILDAANNTGAAVKKREDTHKMAEANKAFAHYRW.

It belongs to the universal ribosomal protein uS7 family. As to quaternary structure, part of the 30S ribosomal subunit. Contacts proteins S9 and S11.

Functionally, one of the primary rRNA binding proteins, it binds directly to 16S rRNA where it nucleates assembly of the head domain of the 30S subunit. Is located at the subunit interface close to the decoding center, probably blocks exit of the E-site tRNA. The polypeptide is Small ribosomal subunit protein uS7 (Bacillus velezensis (strain DSM 23117 / BGSC 10A6 / LMG 26770 / FZB42) (Bacillus amyloliquefaciens subsp. plantarum)).